The sequence spans 279 residues: MTARMEQRFADVAAEGRPVLVTYFMGGDPDFDTSLAIMKALQQAGADIIELGVPFSDPMADGPAIQLAGQRALKAGQTLAKTLELARRFRADDQRTPIVLMGYYNPIYIYGVERFLTDALEAGVDGMIVVDLPPEMDDELCIPALAKGISFIRLATPTTDDRRLPKVLENTSGFVYYVSMTGITGSALPDTSLIAGAVARIKAHTSLPVCVGFGVKTADHARAIGATADGVVVGTAIVNQIASSLTEEGRATEATVPGVEALVRGLAAGVRAARLAAAE.

Residues E50 and D61 each act as proton acceptor in the active site.

This sequence belongs to the TrpA family. As to quaternary structure, tetramer of two alpha and two beta chains.

The catalysed reaction is (1S,2R)-1-C-(indol-3-yl)glycerol 3-phosphate + L-serine = D-glyceraldehyde 3-phosphate + L-tryptophan + H2O. The protein operates within amino-acid biosynthesis; L-tryptophan biosynthesis; L-tryptophan from chorismate: step 5/5. Its function is as follows. The alpha subunit is responsible for the aldol cleavage of indoleglycerol phosphate to indole and glyceraldehyde 3-phosphate. The sequence is that of Tryptophan synthase alpha chain from Sinorhizobium medicae (strain WSM419) (Ensifer medicae).